A 61-amino-acid polypeptide reads, in one-letter code: uncharacterized protein (61 aa).

The tract at residues 23–61 (VPTKWQDYKKPGPNQKYTSDGKKRRRIRRSQKSILGVRS) is disordered. Residues 44–53 (KKRRRIRRSQ) are compositionally biased toward basic residues.

This is an uncharacterized protein from Archaeoglobus fulgidus (strain ATCC 49558 / DSM 4304 / JCM 9628 / NBRC 100126 / VC-16).